The primary structure comprises 300 residues: Acetylglutamate kinase (300 aa).

Substrate contacts are provided by residues 73–74 (GG), Arg-95, and Asn-197.

The protein belongs to the acetylglutamate kinase family. ArgB subfamily.

It localises to the cytoplasm. It catalyses the reaction N-acetyl-L-glutamate + ATP = N-acetyl-L-glutamyl 5-phosphate + ADP. The protein operates within amino-acid biosynthesis; L-arginine biosynthesis; N(2)-acetyl-L-ornithine from L-glutamate: step 2/4. Its function is as follows. Catalyzes the ATP-dependent phosphorylation of N-acetyl-L-glutamate. The chain is Acetylglutamate kinase from Bordetella bronchiseptica (strain ATCC BAA-588 / NCTC 13252 / RB50) (Alcaligenes bronchisepticus).